A 514-amino-acid chain; its full sequence is Pantetheinase (514 aa).

The first 22 residues, Met-1–Ser-22, serve as a signal peptide directing secretion. N-linked (GlcNAc...) asparagine glycosylation is present at Asn-39. Positions Ala-40–Ser-307 constitute a CN hydrolase domain. Catalysis depends on Glu-80, which acts as the Proton acceptor. 2 N-linked (GlcNAc...) asparagine glycosylation sites follow: Asn-87 and Asn-147. Residue Lys-179 is the Proton donor of the active site. Cys-212 functions as the Nucleophile in the catalytic mechanism. N-linked (GlcNAc...) asparagine glycans are attached at residues Asn-316 and Asn-354. Asp-492 is lipidated: GPI-anchor amidated aspartate. Positions Pro-493–Trp-514 are cleaved as a propeptide — removed in mature form.

Belongs to the carbon-nitrogen hydrolase superfamily. BTD/VNN family. Monomer.

It is found in the cell membrane. The catalysed reaction is (R)-pantetheine + H2O = cysteamine + (R)-pantothenate. Its function is as follows. Amidohydrolase that hydrolyzes specifically one of the carboamide linkages in D-pantetheine thus recycling pantothenic acid (vitamin B5) and releasing cysteamine. The protein is Pantetheinase (VNN1) of Canis lupus familiaris (Dog).